The chain runs to 100 residues: Replication restart protein PriB (100 aa).

The SSB domain occupies 1 to 99; it reads MGFNNLVSLA…LRIQNIQEYK (99 aa).

Belongs to the PriB family. Homodimer. Interacts with PriA and DnaT. Component of the replication restart primosome. Primosome assembly occurs via a 'hand-off' mechanism. PriA binds to replication forks, subsequently PriB then DnaT bind; DnaT then displaces ssDNA to generate the helicase loading substrate.

Functionally, involved in the restart of stalled replication forks, which reloads the replicative helicase on sites other than the origin of replication; the PriA-PriB pathway is the major replication restart pathway. During primosome assembly it facilitates complex formation between PriA and DnaT on DNA; stabilizes PriA on DNA. Stimulates the DNA unwinding activity of PriA helicase. The polypeptide is Replication restart protein PriB (Neisseria meningitidis serogroup A / serotype 4A (strain DSM 15465 / Z2491)).